We begin with the raw amino-acid sequence, 155 residues long: MKIKIICFGKLDKAFYVDAFNDYFKRLKKYVDLEIIELKEEINGELNKIKDENSNLLLKKLENYKDFEKIILDVNSKLISTENLVEIIKTNLNYKTAKILFVIGPSDGYSKSFLNSFTNKFSLAKITLPHQLCRIVLIEQIYRVFKIINNEKYHK.

Residues L72, G104, and 123 to 128 each bind S-adenosyl-L-methionine; that span reads LAKITL.

This sequence belongs to the RNA methyltransferase RlmH family. As to quaternary structure, homodimer.

It is found in the cytoplasm. It carries out the reaction pseudouridine(1915) in 23S rRNA + S-adenosyl-L-methionine = N(3)-methylpseudouridine(1915) in 23S rRNA + S-adenosyl-L-homocysteine + H(+). Functionally, specifically methylates the pseudouridine at position 1915 (m3Psi1915) in 23S rRNA. In Mycoplasma capricolum subsp. capricolum (strain California kid / ATCC 27343 / NCTC 10154), this protein is Ribosomal RNA large subunit methyltransferase H.